The chain runs to 364 residues: Cyclin-D3-2 (364 aa).

The segment at 331–364 is disordered; it reads PPGRPIKRGAAAATTADPLPADEESRDAWPPYAA. Positions 340–349 are enriched in low complexity; it reads AAAATTADPL.

This sequence belongs to the cyclin family. Cyclin D subfamily.

The chain is Cyclin-D3-2 (CYCD3-2) from Oryza sativa subsp. japonica (Rice).